Here is a 239-residue protein sequence, read N- to C-terminus: Pyridoxal 5'-phosphate synthase subunit PdxS (239 aa).

Residue D21 coordinates D-ribose 5-phosphate. K78 acts as the Schiff-base intermediate with D-ribose 5-phosphate in catalysis. G150 contacts D-ribose 5-phosphate. R162 is a D-glyceraldehyde 3-phosphate binding site. D-ribose 5-phosphate-binding positions include G211 and 232-233; that span reads GS.

It belongs to the PdxS/SNZ family. As to quaternary structure, in the presence of PdxT, forms a dodecamer of heterodimers.

It carries out the reaction aldehydo-D-ribose 5-phosphate + D-glyceraldehyde 3-phosphate + L-glutamine = pyridoxal 5'-phosphate + L-glutamate + phosphate + 3 H2O + H(+). Its pathway is cofactor biosynthesis; pyridoxal 5'-phosphate biosynthesis. Its function is as follows. Catalyzes the formation of pyridoxal 5'-phosphate from ribose 5-phosphate (RBP), glyceraldehyde 3-phosphate (G3P) and ammonia. The ammonia is provided by the PdxT subunit. Can also use ribulose 5-phosphate and dihydroxyacetone phosphate as substrates, resulting from enzyme-catalyzed isomerization of RBP and G3P, respectively. The chain is Pyridoxal 5'-phosphate synthase subunit PdxS from Francisella tularensis.